Reading from the N-terminus, the 494-residue chain is 4-trimethylaminobutyraldehyde dehydrogenase (494 aa).

At Ser2 the chain carries N-acetylserine. N6-acetyllysine; alternate is present on Lys30. Position 30 is an N6-succinyllysine; alternate (Lys30). Lys59 bears the N6-succinyllysine mark. NAD(+) is bound by residues Lys180 and 232–236 (GSVPT). Glu254 serves as the catalytic Proton acceptor. Residue Cys288 is the Nucleophile of the active site. Lys298 is modified (N6-acetyllysine). N6-acetyllysine; alternate is present on Lys303. The residue at position 303 (Lys303) is an N6-succinyllysine; alternate. Lys344 carries the N6-acetyllysine modification. NAD(+) is bound at residue Glu391.

It belongs to the aldehyde dehydrogenase family. In terms of assembly, homotetramer.

Its subcellular location is the cytoplasm. It localises to the cytosol. The catalysed reaction is 4-(trimethylamino)butanal + NAD(+) + H2O = 4-(trimethylamino)butanoate + NADH + 2 H(+). It carries out the reaction an aldehyde + NAD(+) + H2O = a carboxylate + NADH + 2 H(+). The enzyme catalyses 4-aminobutanal + NAD(+) + H2O = 4-aminobutanoate + NADH + 2 H(+). It catalyses the reaction formaldehyde + NAD(+) + H2O = formate + NADH + 2 H(+). The catalysed reaction is acetaldehyde + NAD(+) + H2O = acetate + NADH + 2 H(+). It carries out the reaction imidazole-4-acetaldehyde + NAD(+) + H2O = imidazole-4-acetate + NADH + 2 H(+). The enzyme catalyses acrolein + NAD(+) + H2O = acrylate + NADH + 2 H(+). It catalyses the reaction (5-hydroxyindol-3-yl)acetaldehyde + NAD(+) + H2O = (5-hydroxyindol-3-yl)acetate + NADH + 2 H(+). The catalysed reaction is 3,4-dihydroxyphenylacetaldehyde + NAD(+) + H2O = 3,4-dihydroxyphenylacetate + NADH + 2 H(+). It carries out the reaction spermine monoaldehyde + NAD(+) + H2O = N-(2-carboxyethyl)spermidine + NADH + 2 H(+). The enzyme catalyses propanal + NAD(+) + H2O = propanoate + NADH + 2 H(+). It catalyses the reaction butanal + NAD(+) + H2O = butanoate + NADH + 2 H(+). The catalysed reaction is pentanal + NAD(+) + H2O = pentanoate + NADH + 2 H(+). It carries out the reaction hexanal + NAD(+) + H2O = hexanoate + NADH + 2 H(+). Its pathway is amine and polyamine biosynthesis; carnitine biosynthesis. Converts gamma-trimethylaminobutyraldehyde into gamma-butyrobetaine with high efficiency (in vitro). Can catalyze the irreversible oxidation of a broad range of aldehydes to the corresponding acids in an NAD-dependent reaction, but with low efficiency. Catalyzes the oxidation of aldehydes arising from biogenic amines and polyamines. The polypeptide is 4-trimethylaminobutyraldehyde dehydrogenase (Mus musculus (Mouse)).